Reading from the N-terminus, the 724-residue chain is Solute carrier organic anion transporter family member 4C1 (724 aa).

Topologically, residues 1 to 105 (MKSAKGIENL…QCLQRCNTPG (105 aa)) are cytoplasmic. Phosphoserine is present on residues Ser-15, Ser-16, Ser-24, Ser-26, and Ser-28. A disordered region spans residues 30–71 (IEVSALSSDPQRENSQPQELQKPQEPQKSPEPSLPSAPPNVS). A compositionally biased stretch (low complexity) spans 44–60 (SQPQELQKPQEPQKSPE). A helical membrane pass occupies residues 106-126 (GFLLHYCLLAVTQGIVVNGLV). The Extracellular portion of the chain corresponds to 127 to 145 (NISISTVEKRYEMKSSLTG). A helical transmembrane segment spans residues 146–166 (LISSSYDISFCLLSLFVSFFG). Topologically, residues 167-172 (ERGHKP) are cytoplasmic. The helical transmembrane segment at 173 to 197 (RWLAFAAFMIGLGALVFSLPQFFSG) threads the bilayer. Topologically, residues 198-223 (EYKLGSLFEDTCVTTRNSTSCTSSTS) are extracellular. Residues 224–254 (SLSNYLYVFILGQLLLGAGGTPLYTLGTAFL) form a helical membrane-spanning segment. Topologically, residues 255–274 (DDSVPTHKSSLYIGTGYAMS) are cytoplasmic. Residues 275–295 (ILGPAIGYVLGGQLLTIYIDV) traverse the membrane as a helical segment. The Extracellular segment spans residues 296–311 (AMGESTDVTEDDPRWL). A helical membrane pass occupies residues 312–336 (GAWWIGFLLSWIFAWSLIIPFSCFP). The Cytoplasmic portion of the chain corresponds to 337–377 (KHLPGTAEIQAGKTSQAHQSNSNADVKFGKSIKDFPAALKN). The chain crosses the membrane as a helical span at residues 378-399 (LMKNAVFMCLVLSTSSEALITT). At 400-419 (GFATFLPKFIENQFGLTSSF) the chain is on the extracellular side. The chain crosses the membrane as a helical span at residues 420 to 443 (AATLGGAVLIPGAALGQILGGFLV). At 444-447 (SKFR) the chain is on the cytoplasmic side. The helical transmembrane segment at 448 to 471 (MTCKNTMKFALFTSGVALTLSFVF) threads the bilayer. At 472 to 580 (MYAKCENEPF…ETHCAKLPIF (109 aa)) the chain is on the extracellular side. Residues 495-549 (GNLIAPCNANCNCSRSYYYPVCGDGVQYFSPCFAGCSNPVAHRKPKVYYNCSCIE) enclose the Kazal-like domain. Cystine bridges form between Cys-501–Cys-530, Cys-507–Cys-526, and Cys-516–Cys-547. The chain crosses the membrane as a helical span at residues 581–603 (LCIFFIVIIFTFMAGTPITVSIL). At 604 to 612 (RCVNHRQRS) the chain is on the cytoplasmic side. A helical transmembrane segment spans residues 613–638 (LALGIQFMVLRLLGTIPGPIIFGFTI). The Extracellular portion of the chain corresponds to 639-672 (DSTCILWDINDCGIKGACWIYDNIKMAHMLVAIS). The helical transmembrane segment at 673–690 (VTCKVITMFFNGFAIFLY) threads the bilayer. The Cytoplasmic segment spans residues 691–724 (KPPPSATDVSFHKENAVVTNVLAEQDLNKIVKEG).

It belongs to the organo anion transporter (TC 2.A.60) family. As to expression, predominantly expressed in kidney but also weakly expressed in both fetal liver and kidney.

The protein resides in the basolateral cell membrane. It carries out the reaction estrone 3-sulfate(out) = estrone 3-sulfate(in). It catalyses the reaction L-thyroxine(out) = L-thyroxine(in). The enzyme catalyses 3,3',5-triiodo-L-thyronine(out) = 3,3',5-triiodo-L-thyronine(in). The catalysed reaction is chenodeoxycholate(out) = chenodeoxycholate(in). It carries out the reaction glycocholate(out) = glycocholate(in). It catalyses the reaction L-homoarginine(in) = L-homoarginine(out). The enzyme catalyses L-arginine(in) = L-arginine(out). The catalysed reaction is N(omega),N(omega)-dimethyl-L-arginine(out) = N(omega),N(omega)-dimethyl-L-arginine(in). In terms of biological role, mediates the transport of organic anions such as steroids (estrone 3-sulfate, chenodeoxycholate, glycocholate) and thyroid hormones (3,3',5-triiodo-L-thyronine (T3), L-thyroxine (T4)), in the kidney. Capable of transporting cAMP and pharmacological substances such as digoxin, ouabain and methotrexate. Transport is independent of sodium, chloride ion, and ATP. Transport activity is stimulated by an acidic extracellular environment due to increased substrate affinity to the transporter. The driving force for this transport activity is currently not known. The role of hydrogencarbonate (HCO3(-), bicarbonate) as the probable counteranion that exchanges for organic anions is still not well defined. Functions as an uptake transporter at the apical membrane, suggesting a role in renal reabsorption. Involved in the renal secretion of the uremic toxin ADMA (N(omega),N(omega)-dimethyl-L-arginine or asymmetrical dimethylarginine), which is associated to cardiovascular events and mortality, and the structurally related amino acids L-arginine and L-homoarginine (a cardioprotective biomarker). Can act bidirectionally, suggesting a dual protective role of this transport protein; exporting L-homoarginine after being synthesized in proximal tubule cells, and mediating uptake of ADMA from the blood into proximal tubule cells where it is degraded by the enzyme dimethylarginine dimethylaminohydrolase 1 (DDAH1). May be involved in sperm maturation by enabling directed movement of organic anions and compounds within or between cells. This ion-transporting process is important to maintain the strict epididymal homeostasis necessary for sperm maturation. May have a role in secretory functions since seminal vesicle epithelial cells are assumed to secrete proteins involved in decapacitation by modifying surface proteins to facilitate the acquisition of the ability to fertilize the egg. The polypeptide is Solute carrier organic anion transporter family member 4C1 (Homo sapiens (Human)).